The chain runs to 841 residues: Protein translocase subunit SecA (841 aa).

Residues Gln-87, 105–109 (GEGKT), and Asp-494 each bind ATP. Residues Cys-825, Cys-827, Cys-836, and Cys-837 each contribute to the Zn(2+) site.

The protein belongs to the SecA family. Monomer and homodimer. Part of the essential Sec protein translocation apparatus which comprises SecA, SecYEG and auxiliary proteins SecDF-YajC and YidC. Requires Zn(2+) as cofactor.

The protein localises to the cell inner membrane. Its subcellular location is the cytoplasm. The enzyme catalyses ATP + H2O + cellular proteinSide 1 = ADP + phosphate + cellular proteinSide 2.. In terms of biological role, part of the Sec protein translocase complex. Interacts with the SecYEG preprotein conducting channel. Has a central role in coupling the hydrolysis of ATP to the transfer of proteins into and across the cell membrane, serving as an ATP-driven molecular motor driving the stepwise translocation of polypeptide chains across the membrane. This is Protein translocase subunit SecA from Syntrophus aciditrophicus (strain SB).